Here is a 378-residue protein sequence, read N- to C-terminus: Erythronate-4-phosphate dehydrogenase (378 aa).

The substrate site is built by Ser45 and Thr66. Positions 146 and 175 each coordinate NAD(+). Residue Arg208 is part of the active site. Residue Asp232 participates in NAD(+) binding. The active site involves Glu237. His254 functions as the Proton donor in the catalytic mechanism. Residue Gly257 participates in NAD(+) binding. Substrate is bound at residue Tyr258.

This sequence belongs to the D-isomer specific 2-hydroxyacid dehydrogenase family. PdxB subfamily. In terms of assembly, homodimer.

It localises to the cytoplasm. The enzyme catalyses 4-phospho-D-erythronate + NAD(+) = (R)-3-hydroxy-2-oxo-4-phosphooxybutanoate + NADH + H(+). It participates in cofactor biosynthesis; pyridoxine 5'-phosphate biosynthesis; pyridoxine 5'-phosphate from D-erythrose 4-phosphate: step 2/5. Its function is as follows. Catalyzes the oxidation of erythronate-4-phosphate to 3-hydroxy-2-oxo-4-phosphonooxybutanoate. The chain is Erythronate-4-phosphate dehydrogenase from Shigella flexneri serotype 5b (strain 8401).